A 1188-amino-acid chain; its full sequence is Major DNA-binding protein (1188 aa).

Residues 838–839 (FW) carry the Required for filament formation motif. The segment at 1145–1175 (CDDDDADKDAPHGAKSDVPNGDDEDVFAGPS) is disordered. The interval 1166–1188 (DDEDVFAGPSAKKRTLATEILFC) is required for nuclear localization.

This sequence belongs to the herpesviridae major DNA-binding protein family. Homooligomers. Forms double-helical filaments necessary for the formation of replication compartments within the host nucleus. Interacts with the origin-binding protein. Interacts with the helicase primase complex; this interaction stimulates primer synthesis activity of the helicase-primase complex. Interacts with the DNA polymerase. Interacts with the alkaline exonuclease; this interaction increases its nuclease processivity.

Its subcellular location is the host nucleus. Functionally, plays several crucial roles in viral infection. Participates in the opening of the viral DNA origin to initiate replication by interacting with the origin-binding protein. May disrupt loops, hairpins and other secondary structures present on ssDNA to reduce and eliminate pausing of viral DNA polymerase at specific sites during elongation. Promotes viral DNA recombination by performing strand-transfer, characterized by the ability to transfer a DNA strand from a linear duplex to a complementary single-stranded DNA circle. Can also catalyze the renaturation of complementary single strands. Additionally, reorganizes the host cell nucleus, leading to the formation of prereplicative sites and replication compartments. This process is driven by the protein which can form double-helical filaments in the absence of DNA. The sequence is that of Major DNA-binding protein from Amazona oratrix (yellow-headed parrot).